The sequence spans 296 residues: (+)-neomenthol dehydrogenase (296 aa).

NADP(+) is bound at residue 16 to 40; it reads RGIGFEICRQLASEGIRVVLTSRDE. Ser-164 contacts substrate. Catalysis depends on Tyr-220, which acts as the Proton acceptor.

The protein belongs to the short-chain dehydrogenases/reductases (SDR) family. Monomer.

The protein resides in the cytoplasm. It catalyses the reaction (+)-neomenthol + NADP(+) = (1R,4S)-menthone + NADPH + H(+). Its function is as follows. Aldehyde reductase that catalyzes the reduction of the aldehyde carbonyl groups on saturated and alpha,beta-unsaturated aldehydes with more than 5 carbons. Involved in basal resistance against pathogens. The chain is (+)-neomenthol dehydrogenase (SDR1) from Arabidopsis thaliana (Mouse-ear cress).